The following is a 431-amino-acid chain: Enolase (431 aa).

Glutamine 167 serves as a coordination point for (2R)-2-phosphoglycerate. Residue glutamate 209 is the Proton donor of the active site. Mg(2+) is bound by residues aspartate 246, glutamate 289, and aspartate 316. (2R)-2-phosphoglycerate contacts are provided by lysine 341, arginine 370, serine 371, and lysine 392. The active-site Proton acceptor is lysine 341.

The protein belongs to the enolase family. Component of the RNA degradosome, a multiprotein complex involved in RNA processing and mRNA degradation. Requires Mg(2+) as cofactor.

It is found in the cytoplasm. Its subcellular location is the secreted. It localises to the cell surface. The enzyme catalyses (2R)-2-phosphoglycerate = phosphoenolpyruvate + H2O. It functions in the pathway carbohydrate degradation; glycolysis; pyruvate from D-glyceraldehyde 3-phosphate: step 4/5. Catalyzes the reversible conversion of 2-phosphoglycerate (2-PG) into phosphoenolpyruvate (PEP). It is essential for the degradation of carbohydrates via glycolysis. The sequence is that of Enolase from Shewanella sp. (strain MR-4).